The primary structure comprises 214 residues: Large ribosomal subunit protein uL3 (214 aa).

Positions 136–156 (THGNSLSHRAPGSIGQNQTPG) are disordered. At glutamine 153 the chain carries N5-methylglutamine.

This sequence belongs to the universal ribosomal protein uL3 family. Part of the 50S ribosomal subunit. Forms a cluster with proteins L14 and L19. Methylated by PrmB.

Its function is as follows. One of the primary rRNA binding proteins, it binds directly near the 3'-end of the 23S rRNA, where it nucleates assembly of the 50S subunit. This is Large ribosomal subunit protein uL3 from Thioalkalivibrio sulfidiphilus (strain HL-EbGR7).